Reading from the N-terminus, the 368-residue chain is BTB/POZ and TAZ domain-containing protein 5 (368 aa).

The segment at 1 to 25 (MENMDDFSPENVLAPPPPPPPMKKS) is disordered. The 69-residue stretch at 55-123 (ADVLIHTDDN…LYSSCYEKQD (69 aa)) folds into the BTB domain. Residues 233–324 (QTYTQLYEAM…SEQCKVPLCS (92 aa)) form a TAZ-type zinc finger. A caM-binding region spans residues 335 to 358 (RKDEKRWKLLVRNVLSTKRIGGSP).

As to quaternary structure, interacts with CUL3A. In terms of tissue distribution, preferentially expressed in young leaves, roots and stems.

It localises to the cytoplasm. It functions in the pathway protein modification; protein ubiquitination. Functionally, may act as a substrate-specific adapter of an E3 ubiquitin-protein ligase complex (CUL3-RBX1-BTB) which mediates the ubiquitination and subsequent proteasomal degradation of target proteins. The polypeptide is BTB/POZ and TAZ domain-containing protein 5 (BT5) (Arabidopsis thaliana (Mouse-ear cress)).